Here is a 339-residue protein sequence, read N- to C-terminus: DNA-directed RNA polymerase subunit alpha (339 aa).

An alpha N-terminal domain (alpha-NTD) region spans residues 1-235 (MTIQKNWQEL…DQLNVFVNFE (235 aa)). An alpha C-terminal domain (alpha-CTD) region spans residues 251–339 (FNPAFLKKVD…ELAKRFEDHY (89 aa)).

It belongs to the RNA polymerase alpha chain family. As to quaternary structure, homodimer. The RNAP catalytic core consists of 2 alpha, 1 beta, 1 beta' and 1 omega subunit. When a sigma factor is associated with the core the holoenzyme is formed, which can initiate transcription.

The enzyme catalyses RNA(n) + a ribonucleoside 5'-triphosphate = RNA(n+1) + diphosphate. Functionally, DNA-dependent RNA polymerase catalyzes the transcription of DNA into RNA using the four ribonucleoside triphosphates as substrates. The polypeptide is DNA-directed RNA polymerase subunit alpha (Rhodopseudomonas palustris (strain BisB18)).